The following is an 827-amino-acid chain: Lon protease (827 aa).

Residues 38 to 233 (LTLLASKYNV…VLLKYLLKDL (196 aa)) form the Lon N-terminal domain. An ATP-binding site is contributed by 384–391 (GPPGVGKT). A Lon proteolytic domain is found at 619–800 (THLPGVAIGL…EEVIQLALQP (182 aa)). Catalysis depends on residues Ser706 and Lys749.

The protein belongs to the peptidase S16 family. Homohexamer. Organized in a ring with a central cavity.

It is found in the cytoplasm. The enzyme catalyses Hydrolysis of proteins in presence of ATP.. In terms of biological role, ATP-dependent serine protease that mediates the selective degradation of mutant and abnormal proteins as well as certain short-lived regulatory proteins. Required for cellular homeostasis and for survival from DNA damage and developmental changes induced by stress. Degrades polypeptides processively to yield small peptide fragments that are 5 to 10 amino acids long. Binds to DNA in a double-stranded, site-specific manner. The protein is Lon protease of Amoebophilus asiaticus (strain 5a2).